The following is a 230-amino-acid chain: 2,3-bisphosphoglycerate-dependent phosphoglycerate mutase (230 aa).

Substrate-binding positions include 8 to 15 (RHGESEWN), 21 to 22 (TG), Arg60, 87 to 90 (ERHY), Lys98, 114 to 115 (RR), and 183 to 184 (GN). His9 acts as the Tele-phosphohistidine intermediate in catalysis. Glu87 acts as the Proton donor/acceptor in catalysis.

The protein belongs to the phosphoglycerate mutase family. BPG-dependent PGAM subfamily.

The catalysed reaction is (2R)-2-phosphoglycerate = (2R)-3-phosphoglycerate. Its pathway is carbohydrate degradation; glycolysis; pyruvate from D-glyceraldehyde 3-phosphate: step 3/5. Functionally, catalyzes the interconversion of 2-phosphoglycerate and 3-phosphoglycerate. The sequence is that of 2,3-bisphosphoglycerate-dependent phosphoglycerate mutase from Streptococcus uberis (strain ATCC BAA-854 / 0140J).